Here is a 443-residue protein sequence, read N- to C-terminus: Adenylosuccinate synthetase (443 aa).

GTP is bound by residues 12-18 (GDEGKGK) and 40-42 (GHT). Residue aspartate 13 is the Proton acceptor of the active site. Aspartate 13 and glycine 40 together coordinate Mg(2+). IMP is bound by residues 13–16 (DEGK), 38–41 (NAGH), threonine 128, arginine 142, glutamine 223, threonine 238, and arginine 302. The active-site Proton donor is histidine 41. 298–304 (TTTGRRR) provides a ligand contact to substrate. GTP is bound by residues arginine 304, 330 to 332 (KLD), and 412 to 414 (SLG).

This sequence belongs to the adenylosuccinate synthetase family. Homodimer. The cofactor is Mg(2+).

The protein resides in the cytoplasm. The enzyme catalyses IMP + L-aspartate + GTP = N(6)-(1,2-dicarboxyethyl)-AMP + GDP + phosphate + 2 H(+). It functions in the pathway purine metabolism; AMP biosynthesis via de novo pathway; AMP from IMP: step 1/2. Plays an important role in the de novo pathway of purine nucleotide biosynthesis. Catalyzes the first committed step in the biosynthesis of AMP from IMP. This Picosynechococcus sp. (strain ATCC 27264 / PCC 7002 / PR-6) (Agmenellum quadruplicatum) protein is Adenylosuccinate synthetase.